The sequence spans 685 residues: DNA ligase (685 aa).

NAD(+)-binding positions include 39–43 (DGEYD), 88–89 (SL), and E119. Residue K121 is the N6-AMP-lysine intermediate of the active site. Residues R142, E182, K302, and K326 each contribute to the NAD(+) site. Residues C420, C423, C438, and C443 each contribute to the Zn(2+) site. In terms of domain architecture, BRCT spans 606–685 (DNATFFSEKR…QTFLEHLDRG (80 aa)).

The protein belongs to the NAD-dependent DNA ligase family. LigA subfamily. Mg(2+) serves as cofactor. Mn(2+) is required as a cofactor.

It carries out the reaction NAD(+) + (deoxyribonucleotide)n-3'-hydroxyl + 5'-phospho-(deoxyribonucleotide)m = (deoxyribonucleotide)n+m + AMP + beta-nicotinamide D-nucleotide.. In terms of biological role, DNA ligase that catalyzes the formation of phosphodiester linkages between 5'-phosphoryl and 3'-hydroxyl groups in double-stranded DNA using NAD as a coenzyme and as the energy source for the reaction. It is essential for DNA replication and repair of damaged DNA. The sequence is that of DNA ligase from Desulforapulum autotrophicum (strain ATCC 43914 / DSM 3382 / VKM B-1955 / HRM2) (Desulfobacterium autotrophicum).